Consider the following 131-residue polypeptide: Large ribosomal subunit protein bL12c (131 aa).

The segment covering 106–125 (KDNTNKENSEEIKQQLEEAG) has biased composition (basic and acidic residues). The disordered stretch occupies residues 106–131 (KDNTNKENSEEIKQQLEEAGAKVSIK).

Belongs to the bacterial ribosomal protein bL12 family. Homodimer. Part of the ribosomal stalk of the 50S ribosomal subunit. Forms a multimeric L10(L12)X complex, where L10 forms an elongated spine to which 2 to 4 L12 dimers bind in a sequential fashion. Binds GTP-bound translation factors.

The protein resides in the plastid. It is found in the chloroplast. Forms part of the ribosomal stalk which helps the ribosome interact with GTP-bound translation factors. Is thus essential for accurate translation. The chain is Large ribosomal subunit protein bL12c from Gracilaria tenuistipitata var. liui (Red alga).